Consider the following 189-residue polypeptide: Probable nicotinate-nucleotide adenylyltransferase (189 aa).

It belongs to the NadD family.

The catalysed reaction is nicotinate beta-D-ribonucleotide + ATP + H(+) = deamido-NAD(+) + diphosphate. The protein operates within cofactor biosynthesis; NAD(+) biosynthesis; deamido-NAD(+) from nicotinate D-ribonucleotide: step 1/1. Functionally, catalyzes the reversible adenylation of nicotinate mononucleotide (NaMN) to nicotinic acid adenine dinucleotide (NaAD). This is Probable nicotinate-nucleotide adenylyltransferase from Bacillus mycoides (strain KBAB4) (Bacillus weihenstephanensis).